Here is a 300-residue protein sequence, read N- to C-terminus: Acetylglutamate kinase (300 aa).

Residues 68–69 (GG), arginine 90, and asparagine 195 contribute to the substrate site.

This sequence belongs to the acetylglutamate kinase family. ArgB subfamily.

The protein localises to the cytoplasm. It carries out the reaction N-acetyl-L-glutamate + ATP = N-acetyl-L-glutamyl 5-phosphate + ADP. It participates in amino-acid biosynthesis; L-arginine biosynthesis; N(2)-acetyl-L-ornithine from L-glutamate: step 2/4. Catalyzes the ATP-dependent phosphorylation of N-acetyl-L-glutamate. This Azotobacter vinelandii (strain DJ / ATCC BAA-1303) protein is Acetylglutamate kinase.